We begin with the raw amino-acid sequence, 139 residues long: Ribulose bisphosphate carboxylase small subunit, chromosomal (139 aa).

It belongs to the RuBisCO small chain family. As to quaternary structure, heterohexadecamer of 8 large and 8 small subunits.

Its function is as follows. RuBisCO catalyzes two reactions: the carboxylation of D-ribulose 1,5-bisphosphate, the primary event in carbon dioxide fixation, as well as the oxidative fragmentation of the pentose substrate. Both reactions occur simultaneously and in competition at the same active site. Although the small subunit is not catalytic it is essential for maximal activity. In Cupriavidus necator (Alcaligenes eutrophus), this protein is Ribulose bisphosphate carboxylase small subunit, chromosomal.